The primary structure comprises 305 residues: N-acetylmuramic acid 6-phosphate etherase (305 aa).

Residues 61-224 enclose the SIS domain; that stretch reads ISDALAKGGR…STGAMVKLGK (164 aa). Glutamate 89 acts as the Proton donor in catalysis. Glutamate 120 is a catalytic residue.

It belongs to the GCKR-like family. MurNAc-6-P etherase subfamily. In terms of assembly, homodimer.

The enzyme catalyses N-acetyl-D-muramate 6-phosphate + H2O = N-acetyl-D-glucosamine 6-phosphate + (R)-lactate. It functions in the pathway amino-sugar metabolism; N-acetylmuramate degradation. Functionally, specifically catalyzes the cleavage of the D-lactyl ether substituent of MurNAc 6-phosphate, producing GlcNAc 6-phosphate and D-lactate. The protein is N-acetylmuramic acid 6-phosphate etherase of Synechocystis sp. (strain ATCC 27184 / PCC 6803 / Kazusa).